The following is a 136-amino-acid chain: Putative LysR family substrate binding domain-containing protein YagP (136 aa).

Belongs to the LysR transcriptional regulatory family.

This chain is Putative LysR family substrate binding domain-containing protein YagP (yagP), found in Escherichia coli (strain K12).